We begin with the raw amino-acid sequence, 330 residues long: CRISPR-associated endonuclease Cas1 (330 aa).

Residues E154, H222, and E237 each coordinate Mn(2+).

The protein belongs to the CRISPR-associated endonuclease Cas1 family. Homodimer, forms a heterotetramer with a Cas2 homodimer. It depends on Mg(2+) as a cofactor. Mn(2+) serves as cofactor.

In terms of biological role, CRISPR (clustered regularly interspaced short palindromic repeat), is an adaptive immune system that provides protection against mobile genetic elements (viruses, transposable elements and conjugative plasmids). CRISPR clusters contain spacers, sequences complementary to antecedent mobile elements, and target invading nucleic acids. CRISPR clusters are transcribed and processed into CRISPR RNA (crRNA). Acts as a dsDNA endonuclease. Involved in the integration of spacer DNA into the CRISPR cassette. This Clostridium perfringens (strain SM101 / Type A) protein is CRISPR-associated endonuclease Cas1.